The chain runs to 286 residues: L-ribulose 3-epimerase (286 aa).

Residues His-12, Ser-69, Glu-152, and Glu-158 each coordinate D-allulose. Residues His-12, Ser-69, Glu-152, and Glu-158 each coordinate D-fructose. The active-site Proton donor/acceptor is the Glu-152. Residue Glu-152 coordinates Mn(2+). Asp-185 contacts Mn(2+). D-allulose contacts are provided by His-188, His-211, Arg-217, and Glu-246. The D-fructose site is built by His-188, His-211, Arg-217, and Glu-246. His-211 serves as a coordination point for Mn(2+). Catalysis depends on Glu-246, which acts as the Proton donor/acceptor. A Mn(2+)-binding site is contributed by Glu-246.

It belongs to the hyi family. In terms of assembly, homodimer. Requires Mn(2+) as cofactor.

The enzyme catalyses L-ribulose = L-xylulose. The catalysed reaction is D-ribulose = D-xylulose. It carries out the reaction D-allulose = keto-D-fructose. It catalyses the reaction keto-L-tagatose = keto-L-sorbose. The enzyme catalyses keto-D-tagatose = keto-D-sorbose. In terms of biological role, catalyzes the epimerization of various ketoses at the C(3) position. Exhibits the highest enzymatic activity toward L-ribulose, followed by D-ribulose, D-allulose and D-fructose. Shows lower activity with L-xylulose, L-tagatose, D-xylulose, D-tagatose, L-sorbose, D-sorbose, and weak activity with L-allulose and L-fructose. This is L-ribulose 3-epimerase from Methylomonas sp. (strain DH-1).